A 31-amino-acid chain; its full sequence is Cytochrome b6-f complex subunit 6 (31 aa).

Residues 4–24 (IFSYIALLLSALVITLTCYIG) form a helical membrane-spanning segment.

Belongs to the PetL family. The 4 large subunits of the cytochrome b6-f complex are cytochrome b6, subunit IV (17 kDa polypeptide, PetD), cytochrome f and the Rieske protein, while the 4 small subunits are PetG, PetL, PetM and PetN. The complex functions as a dimer.

The protein localises to the plastid. It is found in the chloroplast thylakoid membrane. In terms of biological role, component of the cytochrome b6-f complex, which mediates electron transfer between photosystem II (PSII) and photosystem I (PSI), cyclic electron flow around PSI, and state transitions. PetL is important for photoautotrophic growth as well as for electron transfer efficiency and stability of the cytochrome b6-f complex. The protein is Cytochrome b6-f complex subunit 6 of Chlorella vulgaris (Green alga).